Consider the following 403-residue polypeptide: MDKLSIRDLSLEGKKVLVRVDFNVPIKDGKILDDVRIHSAMPTIHYLLKQDAAVILVSHVGRPKGGVFEEAYSLAPIVPVLEGYLGHHVPLSPDCIGEVARQAVAQLSPGRVLLLENVRFHKGEEHSDEDPSFAIELAAYADFYVNDAFGTSHRKHASVYRVPQLFPDRAAAGFLMEKELEFLGQHLLVEPKRPFTAILGGAKMSSKIGVIEALLSCVDHLVLAGGMGYTFLRAMNRQVGNSLVEESGIPLAKKVLEKAQALGVKIHLPVDAKVAKQCDSGEDWRELSIQEGIPEGLAGFDIGAQTIELFSKVIQESATIFWNGPVGVYEVPPFDQGSKAIAQCLASHSSAVTVVGGGDAAAVVALAGCASQISHVSTGGGASLEFLEKGSLPGTEILSPAQS.

Residues 21 to 23 (DFN), R36, 59 to 62 (HVGR), R119, and R154 each bind substrate. ATP-binding positions include K207, G299, E330, and 357–360 (GGDA).

This sequence belongs to the phosphoglycerate kinase family. Monomer.

The protein localises to the cytoplasm. It catalyses the reaction (2R)-3-phosphoglycerate + ATP = (2R)-3-phospho-glyceroyl phosphate + ADP. Its pathway is carbohydrate degradation; glycolysis; pyruvate from D-glyceraldehyde 3-phosphate: step 2/5. This is Phosphoglycerate kinase (pgk) from Chlamydia trachomatis serovar D (strain ATCC VR-885 / DSM 19411 / UW-3/Cx).